The primary structure comprises 452 residues: UPF0210 protein CHY_1509 (452 aa).

Belongs to the UPF0210 family. In terms of assembly, homodimer.

The polypeptide is UPF0210 protein CHY_1509 (Carboxydothermus hydrogenoformans (strain ATCC BAA-161 / DSM 6008 / Z-2901)).